Consider the following 92-residue polypeptide: MSTLKMMLLILLLLLPMATFDSDGQAIPGGGIPSAVNSRVGGDEKSGRSLEKRCRSGKTCPRVGPDVCCERSDCFCKLVPARPFWRYRCICL.

An N-terminal signal peptide occupies residues 1–20 (MSTLKMMLLILLLLLPMATF). Residues 21-53 (DSDGQAIPGGGIPSAVNSRVGGDEKSGRSLEKR) constitute a propeptide that is removed on maturation. A disordered region spans residues 30-49 (GGIPSAVNSRVGGDEKSGRS).

Belongs to the conotoxin N superfamily. Contains 4 disulfide bonds. In terms of tissue distribution, expressed by the venom duct.

It is found in the secreted. The polypeptide is Conotoxin Mr15.2 (Conus marmoreus (Marble cone)).